Reading from the N-terminus, the 152-residue chain is VQ motif-containing protein 8, chloroplastic (152 aa).

The tract at residues 1–42 (MIPTRCNEINGSRPSSLKLAGESHTIKKTSSCKSKPRPHGRA) is disordered. A chloroplast-targeting transit peptide spans 1–58 (MIPTRCNEINGSRPSSLKLAGESHTIKKTSSCKSKPRPHGRASPVIIYAHSPKVIHTR). Residues 62–71 (FMALVQRLTG) carry the VQ motif. A disordered region spans residues 80 to 108 (TSESSSSVVTEEVNVGDDNTAAPFSQDRT). Residues 81 to 92 (SESSSSVVTEEV) are compositionally biased toward low complexity.

It localises to the plastid. The protein localises to the chloroplast. In terms of biological role, may be involved in chloroplast development. In Arabidopsis thaliana (Mouse-ear cress), this protein is VQ motif-containing protein 8, chloroplastic.